Consider the following 269-residue polypeptide: Hydroxyethylthiazole kinase (269 aa).

M41 contributes to the substrate binding site. R117 and S163 together coordinate ATP. G190 lines the substrate pocket.

The protein belongs to the Thz kinase family. The cofactor is Mg(2+).

The enzyme catalyses 5-(2-hydroxyethyl)-4-methylthiazole + ATP = 4-methyl-5-(2-phosphooxyethyl)-thiazole + ADP + H(+). Its pathway is cofactor biosynthesis; thiamine diphosphate biosynthesis; 4-methyl-5-(2-phosphoethyl)-thiazole from 5-(2-hydroxyethyl)-4-methylthiazole: step 1/1. Functionally, catalyzes the phosphorylation of the hydroxyl group of 4-methyl-5-beta-hydroxyethylthiazole (THZ). The sequence is that of Hydroxyethylthiazole kinase from Latilactobacillus sakei subsp. sakei (strain 23K) (Lactobacillus sakei subsp. sakei).